We begin with the raw amino-acid sequence, 444 residues long: Phosphoglucosamine mutase (444 aa).

Ser-101 functions as the Phosphoserine intermediate in the catalytic mechanism. Residues Ser-101, Asp-240, Asp-242, and Asp-244 each coordinate Mg(2+). Ser-101 carries the phosphoserine modification.

Belongs to the phosphohexose mutase family. Mg(2+) is required as a cofactor. Post-translationally, activated by phosphorylation.

The catalysed reaction is alpha-D-glucosamine 1-phosphate = D-glucosamine 6-phosphate. Catalyzes the conversion of glucosamine-6-phosphate to glucosamine-1-phosphate. The sequence is that of Phosphoglucosamine mutase from Photobacterium profundum (strain SS9).